An 87-amino-acid polypeptide reads, in one-letter code: Small ribosomal subunit protein uS17 (87 aa).

It belongs to the universal ribosomal protein uS17 family. In terms of assembly, part of the 30S ribosomal subunit.

One of the primary rRNA binding proteins, it binds specifically to the 5'-end of 16S ribosomal RNA. The chain is Small ribosomal subunit protein uS17 from Anoxybacillus flavithermus (strain DSM 21510 / WK1).